The following is a 126-amino-acid chain: Holo-[acyl-carrier-protein] synthase (126 aa).

Mg(2+) contacts are provided by Asp9 and Glu58.

The protein belongs to the P-Pant transferase superfamily. AcpS family. It depends on Mg(2+) as a cofactor.

The protein resides in the cytoplasm. It catalyses the reaction apo-[ACP] + CoA = holo-[ACP] + adenosine 3',5'-bisphosphate + H(+). In terms of biological role, transfers the 4'-phosphopantetheine moiety from coenzyme A to a Ser of acyl-carrier-protein. This Buchnera aphidicola subsp. Cinara cedri (strain Cc) protein is Holo-[acyl-carrier-protein] synthase.